A 464-amino-acid chain; its full sequence is 3-isopropylmalate dehydratase large subunit (464 aa).

Residues Cys337, Cys397, and Cys400 each contribute to the [4Fe-4S] cluster site.

The protein belongs to the aconitase/IPM isomerase family. LeuC type 1 subfamily. In terms of assembly, heterodimer of LeuC and LeuD. Requires [4Fe-4S] cluster as cofactor.

The enzyme catalyses (2R,3S)-3-isopropylmalate = (2S)-2-isopropylmalate. The protein operates within amino-acid biosynthesis; L-leucine biosynthesis; L-leucine from 3-methyl-2-oxobutanoate: step 2/4. In terms of biological role, catalyzes the isomerization between 2-isopropylmalate and 3-isopropylmalate, via the formation of 2-isopropylmaleate. This is 3-isopropylmalate dehydratase large subunit from Bacillus cereus (strain AH820).